The chain runs to 318 residues: L-lactate dehydrogenase (318 aa).

NAD(+)-binding positions include Val-18, Asp-39, Lys-44, Tyr-69, and 83 to 84 (GA). Substrate is bound by residues Gln-86 and Arg-92. NAD(+)-binding positions include Ser-105, 122–124 (VSN), and Ser-147. 124 to 127 (NPVD) provides a ligand contact to substrate. Residue 152–155 (DTSR) coordinates substrate. The active-site Proton acceptor is His-179. Tyr-225 carries the post-translational modification Phosphotyrosine. Thr-234 lines the substrate pocket.

It belongs to the LDH/MDH superfamily. LDH family. Homotetramer.

It localises to the cytoplasm. The enzyme catalyses (S)-lactate + NAD(+) = pyruvate + NADH + H(+). It participates in fermentation; pyruvate fermentation to lactate; (S)-lactate from pyruvate: step 1/1. Catalyzes the conversion of lactate to pyruvate. In Clostridium botulinum (strain Okra / Type B1), this protein is L-lactate dehydrogenase.